The chain runs to 1131 residues: Protein DWARF 53 (1131 aa).

The 174-residue stretch at 8–181 (ARQCLSPAAV…KLAILRPAPP (174 aa)) folds into the Clp R domain. Repeat stretches follow at residues 12–85 (LSPA…LDRL) and 103–181 (VSNS…PAPP). The segment at 511–574 (NRDPYKPFPR…ISSPSVTNKR (64 aa)) is disordered. Over residues 558–569 (SSSTARPISSPS) the composition is skewed to low complexity. The EAR 1 motif lies at 578–582 (LVLNL). Residues 588–655 (KSDENLQERG…KRVEDSERSV (68 aa)) form a disordered region. Residues 597 to 609 (GMQSQHGTLSNVD) are compositionally biased toward polar residues. Over residues 646 to 655 (KRVEDSERSV) the composition is skewed to basic and acidic residues. An EAR 2 motif is present at residues 799-803 (LDLNL). Disordered stretches follow at residues 951–970 (ISDD…RLHR) and 976–1002 (FDLN…NSYG). The EAR 3 signature appears at 976–981 (FDLNLP). Residues 982–993 (VDEDEPLDADDD) are compositionally biased toward acidic residues.

Belongs to the ClpA/ClpB family. As to quaternary structure, interacts with D3. Interacts with D14. The interaction with D14 is enhanced in the presence of strigolactones. The interaction with D14 occurs in the presence of (2'R) stereoisomers of strigolactones, but not (2'S) stereoisomers. Interacts with the TOPLESS-related proteins TPR1, TPR2 and TPR3. Interacts with SPL14/IPA1. In terms of processing, polyubiquitinated. Strigolactone, but not karrikin, triggers rapid SCF(D3)-dependent degradation via the proteasome. Expressed in the shoot bases of seedlings, young leaves, axillary buds and young panicles. Expressed in young roots vasculature, culms, internodes and nodes, preferentially in the parenchyma cells surrounding the xylem.

The protein localises to the nucleus. In terms of biological role, repressor of strigolactones (SL) signaling. Subjected to a negative feedback control of SL signaling. Suppresses the transcriptional activation activity of SPL14/IPA1 in SL signaling. Acts with SPL14/IPA1 to mediate the SL-regulated tiller development. Subject to a negative feedback regulation by SPL14/IPA1, which binds to D53 promoter to repress D53 gene expression. The polypeptide is Protein DWARF 53 (Oryza sativa subsp. japonica (Rice)).